Reading from the N-terminus, the 83-residue chain is U25-theraphotoxin-Cg1b (83 aa).

The first 23 residues, 1-23 (MRFHTLLFLSFLLLVSCALICTA), serve as a signal peptide directing secretion. Positions 24–48 (QHPGLEKSGMFHENVGKGQHIEEKR) are excised as a propeptide. 3 disulfides stabilise this stretch: Cys-50–Cys-66, Cys-57–Cys-71, and Cys-65–Cys-79.

It belongs to the neurotoxin 07 (Beta/delta-agtx) family. 03 (aga-4) subfamily. JZTX sub-subfamily. As to expression, expressed by the venom gland.

It localises to the secreted. Functionally, probable ion channel inhibitor. This is U25-theraphotoxin-Cg1b from Chilobrachys guangxiensis (Chinese earth tiger tarantula).